The chain runs to 98 residues: NADH-ubiquinone oxidoreductase chain 4L (98 aa).

2 helical membrane passes run Ser-29–Leu-49 and Ile-61–Val-81.

It belongs to the complex I subunit 4L family. As to quaternary structure, core subunit of respiratory chain NADH dehydrogenase (Complex I) which is composed of 45 different subunits.

Its subcellular location is the mitochondrion inner membrane. It carries out the reaction a ubiquinone + NADH + 5 H(+)(in) = a ubiquinol + NAD(+) + 4 H(+)(out). In terms of biological role, core subunit of the mitochondrial membrane respiratory chain NADH dehydrogenase (Complex I) which catalyzes electron transfer from NADH through the respiratory chain, using ubiquinone as an electron acceptor. Part of the enzyme membrane arm which is embedded in the lipid bilayer and involved in proton translocation. The protein is NADH-ubiquinone oxidoreductase chain 4L (MT-ND4L) of Cheirogaleus medius (Fat-tailed dwarf lemur).